We begin with the raw amino-acid sequence, 364 residues long: tRNA-specific 2-thiouridylase MnmA (364 aa).

ATP contacts are provided by residues 12–19 and Met-38; that span reads GMSGGVDS. The segment at 98 to 100 is interaction with target base in tRNA; the sequence is NPD. Residue Cys-103 is the Nucleophile of the active site. Cysteines 103 and 199 form a disulfide. An ATP-binding site is contributed by Gly-127. The interaction with tRNA stretch occupies residues 149 to 151; that stretch reads KDQ. Residue Cys-199 is the Cysteine persulfide intermediate of the active site. An interaction with tRNA region spans residues 307-308; the sequence is RY.

This sequence belongs to the MnmA/TRMU family.

The protein resides in the cytoplasm. It carries out the reaction S-sulfanyl-L-cysteinyl-[protein] + uridine(34) in tRNA + AH2 + ATP = 2-thiouridine(34) in tRNA + L-cysteinyl-[protein] + A + AMP + diphosphate + H(+). In terms of biological role, catalyzes the 2-thiolation of uridine at the wobble position (U34) of tRNA, leading to the formation of s(2)U34. The sequence is that of tRNA-specific 2-thiouridylase MnmA from Shouchella clausii (strain KSM-K16) (Alkalihalobacillus clausii).